The chain runs to 553 residues: Peroxiredoxin-2A (553 aa).

The 157-residue stretch at 4–160 (IDVGDFVPDG…LMKMTTTTMS (157 aa)) folds into the Thioredoxin domain. The active-site Cysteine sulfenic acid (-SOH) intermediate is the Cys-51. The 46-residue stretch at 156 to 201 (TTTMSNLPTDLLEEIISRVPRKYMRAVRLTCKRWNGMFKSQSFTKM) folds into the F-box domain.

Belongs to the peroxiredoxin family. Prx5 subfamily. As to quaternary structure, monomer.

It carries out the reaction [glutaredoxin]-dithiol + a hydroperoxide = [glutaredoxin]-disulfide + an alcohol + H2O. In terms of biological role, thiol-specific peroxidase that catalyzes the reduction of hydrogen peroxide and organic hydroperoxides to water and alcohols, respectively. Plays a role in cell protection against oxidative stress by detoxifying peroxides. May be involved in intracellular redox signaling. In Arabidopsis thaliana (Mouse-ear cress), this protein is Peroxiredoxin-2A (PRXIIA).